Consider the following 316-residue polypeptide: Pantothenate kinase (316 aa).

95 to 102 provides a ligand contact to ATP; that stretch reads GSVAVGKS.

This sequence belongs to the prokaryotic pantothenate kinase family.

The protein localises to the cytoplasm. It carries out the reaction (R)-pantothenate + ATP = (R)-4'-phosphopantothenate + ADP + H(+). The protein operates within cofactor biosynthesis; coenzyme A biosynthesis; CoA from (R)-pantothenate: step 1/5. The chain is Pantothenate kinase from Shewanella putrefaciens (strain CN-32 / ATCC BAA-453).